The chain runs to 280 residues: MASLGVSEMLGTPLNFRAVSRSSAPLASSPSTFKTVALFSKKKPAPAKSKAVSETSDELAKWYGPDRRIFLPDGLLDRSEIPEYLNGEVAGDYGYDPFGLGKKPENFAKYQAFELIHARWAMLGAAGFIIPEALNKYGANCGPEAVWFKTGALLLDGNTLNYFGKNIPINLVLAVVAEVVLLGGAEYYRITNGLDFEDKLHPGGPFDPLGLAKDPEQGALLKVKEIKNGRLAMFAMLGFFIQAYVTGEGPVENLAKHLSDPFGNNLLTVIAGTAERAPTL.

The N-terminal 48 residues, 1-48 (MASLGVSEMLGTPLNFRAVSRSSAPLASSPSTFKTVALFSKKKPAPAK), are a transit peptide targeting the chloroplast. F70 serves as a coordination point for chlorophyll b. The chlorophyll a site is built by Y95, E114, and H117. 2 helical membrane passes run 110–130 (YQAF…GFII) and 167–187 (IPIN…GAEY). Residues R119, I167, E186, and R189 each coordinate chlorophyll b. Residues K224, E225, N228, R230, Q242, and H257 each coordinate chlorophyll a. Residues 231-251 (LAMFAMLGFFIQAYVTGEGPV) traverse the membrane as a helical segment.

The protein belongs to the light-harvesting chlorophyll a/b-binding (LHC) protein family. In terms of assembly, forms heterotrimers with LHCB3. The LHC complex consists of chlorophyll a-b binding proteins. The cofactor is Binds at least 14 chlorophylls (8 Chl-a and 6 Chl-b) and carotenoids such as lutein and neoxanthin.. Photoregulated by reversible phosphorylation of its threonine residues.

Its subcellular location is the plastid. The protein resides in the chloroplast thylakoid membrane. In terms of biological role, the light-harvesting complex (LHC) functions as a light receptor, it captures and delivers excitation energy to photosystems with which it is closely associated. The chain is Chlorophyll a-b binding protein CP26, chloroplastic (LHCB5) from Arabidopsis thaliana (Mouse-ear cress).